Consider the following 370-residue polypeptide: Neutral protease 2 homolog AFUB_070680 (370 aa).

Positions 1 to 19 are cleaved as a signal peptide; that stretch reads MKVTILASAILALINGALA. Residues 20-172 constitute a propeptide that is removed on maturation; that stretch reads LPANTPTLDV…PQAIKLLDRR (153 aa). 2 disulfide bridges follow: Cys-178/Cys-250 and Cys-257/Cys-275. His-300 provides a ligand contact to Zn(2+). Glu-301 is a catalytic residue. His-304 and Asp-315 together coordinate Zn(2+).

This sequence belongs to the peptidase M35 family. Zn(2+) is required as a cofactor.

It localises to the secreted. It carries out the reaction Preferential cleavage of bonds with hydrophobic residues in P1'. Also 3-Asn-|-Gln-4 and 8-Gly-|-Ser-9 bonds in insulin B chain.. Secreted metalloproteinase that allows assimilation of proteinaceous substrates. Shows high activities on basic nuclear substrates such as histone and protamine. May be involved in virulence. The protein is Neutral protease 2 homolog AFUB_070680 of Aspergillus fumigatus (strain CBS 144.89 / FGSC A1163 / CEA10) (Neosartorya fumigata).